Here is a 424-residue protein sequence, read N- to C-terminus: DUF21 domain-containing protein At4g33700 (424 aa).

Over 1 to 11 (MAVEYVCCSPN) the chain is Extracellular. Positions 8–191 (CSPNFFIHIA…GKGGELTHDE (184 aa)) constitute a CNNM transmembrane domain. The chain crosses the membrane as a helical span at residues 12–32 (FFIHIAVIVFLVLFAGLMSGL). The Cytoplasmic segment spans residues 33-70 (TLGLMSLSLVDLEVLAKSGTPEHRKYAAKILPVVKNQH). A helical membrane pass occupies residues 71–91 (LLLVTLLICNAAAMETLPIFL). The Extracellular segment spans residues 92-94 (DGL). The helical transmembrane segment at 95 to 115 (VTAWGAILISVTLILLFGEII) threads the bilayer. Residues 116-136 (PQSICSRYGLAIGATVAPFVR) lie on the Cytoplasmic side of the membrane. The chain crosses the membrane as a helical span at residues 137-157 (VLVFICLPVAWPISKLLDFLL). At 158 to 424 (GHRRAALFRR…DETDHHFEDS (267 aa)) the chain is on the extracellular side. One can recognise a CBS 1 domain in the interval 210–271 (MTPISDIFVI…TINPDEEIPV (62 aa)). Residues Asn273 and Asn319 are each glycosylated (N-linked (GlcNAc...) asparagine). 2 consecutive CBS domains span residues 275–331 (TIRR…DVDS) and 355–416 (PNRA…IFDE). Disordered regions lie at residues 321-340 (SVKE…PQER) and 355-374 (PNRA…SKDN). Position 331 is a phosphoserine (Ser331).

It localises to the membrane. The protein is DUF21 domain-containing protein At4g33700 (CBSDUF6) of Arabidopsis thaliana (Mouse-ear cress).